The primary structure comprises 340 residues: Phospho-N-acetylmuramoyl-pentapeptide-transferase (340 aa).

The next 10 helical transmembrane spans lie at 3–23 (MSLI…PHFI), 53–73 (GGTV…FHVF), 79–99 (AYGA…IGFL), 119–139 (MALQ…PSGT), 144–164 (IGGL…FWIV), 176–196 (IDGL…IIAF), 200–220 (ELAI…FFVF), 227–247 (VFMG…ISIA), 250–270 (VEWT…SVML), and 315–335 (VDAF…WMVL).

It belongs to the glycosyltransferase 4 family. MraY subfamily. Requires Mg(2+) as cofactor.

It is found in the cell membrane. It catalyses the reaction UDP-N-acetyl-alpha-D-muramoyl-L-alanyl-gamma-D-glutamyl-L-lysyl-D-alanyl-D-alanine + di-trans,octa-cis-undecaprenyl phosphate = Mur2Ac(oyl-L-Ala-gamma-D-Glu-L-Lys-D-Ala-D-Ala)-di-trans,octa-cis-undecaprenyl diphosphate + UMP. Its pathway is cell wall biogenesis; peptidoglycan biosynthesis. Functionally, catalyzes the initial step of the lipid cycle reactions in the biosynthesis of the cell wall peptidoglycan: transfers peptidoglycan precursor phospho-MurNAc-pentapeptide from UDP-MurNAc-pentapeptide onto the lipid carrier undecaprenyl phosphate, yielding undecaprenyl-pyrophosphoryl-MurNAc-pentapeptide, known as lipid I. The protein is Phospho-N-acetylmuramoyl-pentapeptide-transferase of Streptococcus thermophilus (strain ATCC BAA-250 / LMG 18311).